Here is a 181-residue protein sequence, read N- to C-terminus: ATP synthase subunit b (181 aa).

Residues 16 to 36 (LIPPIPELVIGLIAFVIVFGF) form a helical membrane-spanning segment.

This sequence belongs to the ATPase B chain family. In terms of assembly, F-type ATPases have 2 components, F(1) - the catalytic core - and F(0) - the membrane proton channel. F(1) has five subunits: alpha(3), beta(3), gamma(1), delta(1), epsilon(1). F(0) has three main subunits: a(1), b(2) and c(10-14). The alpha and beta chains form an alternating ring which encloses part of the gamma chain. F(1) is attached to F(0) by a central stalk formed by the gamma and epsilon chains, while a peripheral stalk is formed by the delta and b chains.

Its subcellular location is the cell membrane. Functionally, f(1)F(0) ATP synthase produces ATP from ADP in the presence of a proton or sodium gradient. F-type ATPases consist of two structural domains, F(1) containing the extramembraneous catalytic core and F(0) containing the membrane proton channel, linked together by a central stalk and a peripheral stalk. During catalysis, ATP synthesis in the catalytic domain of F(1) is coupled via a rotary mechanism of the central stalk subunits to proton translocation. Its function is as follows. Component of the F(0) channel, it forms part of the peripheral stalk, linking F(1) to F(0). This chain is ATP synthase subunit b, found in Streptomyces lividans.